The sequence spans 613 residues: Probable inactive purple acid phosphatase 1 (613 aa).

An N-terminal signal peptide occupies residues 1 to 24 (MRESLVAILVTVISVLGAIHQVKS). N-linked (GlcNAc...) asparagine glycosylation is found at Asn89 and Asn116. Asp295 serves as a coordination point for Fe cation. Asn316 carries an N-linked (GlcNAc...) asparagine glycan. Fe cation contacts are provided by Asp336 and Tyr339. Residue Asp336 coordinates Zn(2+). Zn(2+) contacts are provided by Asn369, His458, and His500. Residue Asn369 participates in substrate binding. A substrate-binding site is contributed by 500–502 (HAH). Position 502 (His502) interacts with Fe cation. Residues Asn528 and Asn551 are each glycosylated (N-linked (GlcNAc...) asparagine).

This sequence belongs to the metallophosphoesterase superfamily. Purple acid phosphatase family. As to quaternary structure, homodimer. It depends on Fe cation as a cofactor. Zn(2+) is required as a cofactor. In terms of tissue distribution, expressed in roots, stems, leaves, flowers and siliques.

The protein localises to the secreted. This is Probable inactive purple acid phosphatase 1 (PAP1) from Arabidopsis thaliana (Mouse-ear cress).